The sequence spans 267 residues: Thyroxine 5-deiodinase (267 aa).

At 1-15 the chain is on the cytoplasmic side; that stretch reads MHDSGGVQMARALKH. A helical; Signal-anchor for type II membrane protein membrane pass occupies residues 16-36; that stretch reads AALCLMLLPRFLLAAVMLWLL. Residues 37 to 267 are Extracellular-facing; sequence DFLCIRKKVL…VNSQTAVLHV (231 aa). Residue U131 is part of the active site. U131 is a non-standard amino acid (selenocysteine).

It belongs to the iodothyronine deiodinase family. Monomer. Homodimer. May undergo minor heretodimerization with DIO1 and DIO2.

Its subcellular location is the cell membrane. The protein resides in the endosome membrane. The enzyme catalyses 3,3',5'-triiodo-L-thyronine + iodide + A + H(+) = L-thyroxine + AH2. It carries out the reaction 3,3'-diiodo-L-thyronine + iodide + A + H(+) = 3,3',5-triiodo-L-thyronine + AH2. It catalyses the reaction 3-iodo-L-thyronine + iodide + A + H(+) = 3,5-diiodo-L-thyronine + AH2. The catalysed reaction is L-thyronine + iodide + A + H(+) = 3-iodo-L-thyronine + AH2. The enzyme catalyses 3',5'-diiodo-L-thyronine + iodide + A + H(+) = 3,3',5'-triiodo-L-thyronine + AH2. It carries out the reaction 3'-iodo-L-thyronine + iodide + A + H(+) = 3,3'-diiodo-L-thyronine + AH2. It catalyses the reaction 3,3',5'-triiodothyronamine + iodide + A + H(+) = 3,3',5,5'-tetraiodothyronamine + AH2. The catalysed reaction is 3',5'-diiodothyronamine + iodide + A + H(+) = 3,3',5'-triiodothyronamine + AH2. The enzyme catalyses 3,3'-diiodothyronamine + iodide + A + H(+) = 3,3',5-triiodothyronamine + AH2. It carries out the reaction 3-iodothyronamine + iodide + A + H(+) = 3,5-diiodothyronamine + AH2. It catalyses the reaction 3'-iodothyronamine + iodide + A + H(+) = 3,3'-diiodothyronamine + AH2. The catalysed reaction is thyronamine + iodide + A + H(+) = 3-iodothyronamine + AH2. Plays a crucial role in the metabolism of thyroid hormones (TH) and has specific roles in TH activation and inactivation by deiodination. Catalyzes the deiodination of L-thyroxine (T4) to 3,3',5'-triiodothyronine (rT3), 3,5,3'-triiodothyronine (T3) to 3,3'-diiodothyronine (3,3'-T2), 3,5-diiodothyronine (3,5-T2) to 3-monoiodothyronine (3-T1), rT3 to 3',5'-diiodothyronine (3',5'-T2) and 3,3'-T2 to 3'-monoiodothyronine (3'-T1) via inner-ring deiodination (IRD). Catalyzes the deiodination of 3-T1 to L-thyronine (T0) via outer-ring deiodination (ORD). Catalyzes the tyrosyl ring deiodinations of 3,3',5,5'-tetraiodothyronamine, 3,3',5'-triiodothyronamine, 3,5,3'-triiodothyronamine, 3,5-diiodothyronamine, 3,3'-diiodothyronamine and 3-iodothyronamine. This is Thyroxine 5-deiodinase (dio3) from Sparus aurata (Gilthead sea bream).